Reading from the N-terminus, the 205-residue chain is Mitotic spindle assembly checkpoint protein MAD2A (205 aa).

Alanine 2 carries the N-acetylalanine modification. A phosphoserine mark is found at serine 6, serine 130, serine 170, serine 178, serine 185, and serine 195. The HORMA domain occupies 14–197 (RGSAEIVAEF…TTIHKVNSMV (184 aa)). The required for assuming the closed conformation and for interaction with CDC20 stretch occupies residues 195–205 (SMVAYKIPVND).

It belongs to the MAD2 family. In terms of assembly, monomer and homodimer. Heterodimerizes with MAD2L1 in order to form a tetrameric MAD1L1-MAD2L1 core complex. In the closed and open conformation, interacts with MAD1L1. Formation of a heterotetrameric core complex containing two molecules each of MAD1L1 and of MAD2L1 promotes binding of another molecule of MAD2L1 to each MAD2L1, resulting in a heterohexamer. Interacts with MAD2L1BP. Interacts with ADAM17/TACE. Interacts with CDC20. Dimeric MAD2L1 in the closed conformation interacts with CDC20. Monomeric MAD2L1 in the open conformation does not interact with CDC20. CDC20 competes with MAD1L1 for MAD2L1 binding. In the closed conformation, interacts with BUB1B. Interacts with TTK. Interacts with TPR. Binds to UBD (via ubiquitin-like 1 domain) during mitosis. Interacts with isoform 1 and isoform 2 of NEK2. Interacts with HSF1; this interaction occurs in mitosis. Interacts with isoform 3 of MAD1L1; this interaction leads to the cytoplasmic sequestration of MAD2L1. In terms of processing, phosphorylated on multiple serine residues. The level of phosphorylation varies during the cell cycle and is highest during mitosis. Phosphorylation abolishes interaction with MAD1L1 and reduces interaction with CDC20. Phosphorylated by NEK2.

The protein localises to the nucleus. It is found in the chromosome. It localises to the centromere. The protein resides in the kinetochore. Its subcellular location is the cytoplasm. The protein localises to the cytoskeleton. It is found in the spindle pole. Its function is as follows. Component of the spindle-assembly checkpoint that prevents the onset of anaphase until all chromosomes are properly aligned at the metaphase plate. In the closed conformation (C-MAD2) forms a heterotetrameric complex with MAD1L1 at unattached kinetochores during prometaphase, the complex recruits open conformation molecules of MAD2L1 (O-MAD2) and then promotes the conversion of O-MAD2 to C-MAD2. Required for the execution of the mitotic checkpoint which monitors the process of kinetochore-spindle attachment and inhibits the activity of the anaphase promoting complex by sequestering CDC20 until all chromosomes are aligned at the metaphase plate. The sequence is that of Mitotic spindle assembly checkpoint protein MAD2A (MAD2L1) from Homo sapiens (Human).